Reading from the N-terminus, the 436-residue chain is MANPSPHQIYNVTWVITNVQTNTQANATSMLGTLTDAYPTLHVDLCDLVGDTWEPIVLNPTSVRPGAVLLSSSPKYGCKTTDRKKQQQTYPFYVCPGHAPSLGPKGTHCGGAQDGFCAAWGCETTGEAWWKPTSSWDYITVKRGSSPDNSCEGKCNPLVLQFTQKGRQASWDGPKMWGLRLYRTGYDPIALFTVSRQVSTITPPQAMGPNLVLPDQKPPSRQSQTGSKVATQRPQTNESAPRSVGPTTMGPKRIGTGDRLINLVQGTYLALNATDPNKTKDCWLCLVSRPPYYEGIAILGNYSNQTNPPPSCLSTPQHKLTISEVSGQGLCIGTVPKTHQALCNKTQQGHTGAHYLAAPNGTYWACNTGLTPCISMAVLNWTSDFCVLIELWPRVTYHQPEYVYTHFAKAVRFRREPISLTVALMLGGLTVGGIAA.

A signal peptide is located at residue methionine 1. Residues 2–436 lie on the Extracellular side of the membrane; the sequence is ANPSPHQIYN…GGLTVGGIAA (435 aa). Asparagine 11 and asparagine 26 each carry an N-linked (GlcNAc...) asparagine; by host glycan. Intrachain disulfides connect cysteine 95/cysteine 117 and cysteine 109/cysteine 122. The segment at 203 to 255 is disordered; it reads PPQAMGPNLVLPDQKPPSRQSQTGSKVATQRPQTNESAPRSVGPTTMGPKRIG. Positions 219 to 240 are enriched in polar residues; sequence PSRQSQTGSKVATQRPQTNESA. Residues asparagine 237, asparagine 272, and asparagine 277 are each glycosylated (N-linked (GlcNAc...) asparagine; by host). A CXXC motif is present at residues 282–285; the sequence is CWLC. N-linked (GlcNAc...) asparagine; by host glycans are attached at residues asparagine 304, asparagine 344, asparagine 360, and asparagine 380.

The mature envelope protein (Env) consists of a trimer of SU-TM heterodimers attached by a labile interchain disulfide bond. Post-translationally, specific enzymatic cleavages in vivo yield mature proteins. Envelope glycoproteins are synthesized as an inactive precursor that is N-glycosylated and processed likely by host cell furin or by a furin-like protease in the Golgi to yield the mature SU and TM proteins. The cleavage site between SU and TM requires the minimal sequence [KR]-X-[KR]-R.

The protein resides in the virion membrane. The protein localises to the host cell membrane. Functionally, the surface protein (SU) attaches the virus to the host cell by binding to its receptor. This interaction triggers the refolding of the transmembrane protein (TM) and is thought to activate its fusogenic potential by unmasking its fusion peptide. Fusion occurs at the host cell plasma membrane. Its function is as follows. The transmembrane protein (TM) acts as a class I viral fusion protein. Under the current model, the protein has at least 3 conformational states: pre-fusion native state, pre-hairpin intermediate state, and post-fusion hairpin state. During viral and target cell membrane fusion, the coiled coil regions (heptad repeats) assume a trimer-of-hairpins structure, positioning the fusion peptide in close proximity to the C-terminal region of the ectodomain. The formation of this structure appears to drive apposition and subsequent fusion of viral and target cell membranes. Membranes fusion leads to delivery of the nucleocapsid into the cytoplasm. The protein is Envelope glycoprotein of Feline leukemia virus (strain C/FS246).